A 378-amino-acid polypeptide reads, in one-letter code: UPF0754 membrane protein BC_0879 (378 aa).

A helical transmembrane segment spans residues 357-377 (YLGALLGGMIGLVQGLLLLFL).

It belongs to the UPF0754 family.

Its subcellular location is the cell membrane. The chain is UPF0754 membrane protein BC_0879 from Bacillus cereus (strain ATCC 14579 / DSM 31 / CCUG 7414 / JCM 2152 / NBRC 15305 / NCIMB 9373 / NCTC 2599 / NRRL B-3711).